Consider the following 239-residue polypeptide: Phosducin-like protein 3 (239 aa).

Met-1 carries the N-acetylmethionine modification. Residues 32–180 (EAEEEQRILQ…EGDIKAQFIG (149 aa)) form the Phosducin domain. At Ser-43 the chain carries Phosphoserine. The interval 91–239 (FGEVLEISGK…MKRDSDSEGD (149 aa)) is thioredoxin fold. 2 interaction with XIAP regions span residues 97-99 (ISG) and 153-155 (TCI). Phosphoserine occurs at positions 234 and 236.

Belongs to the phosducin family. As to quaternary structure, interacts (via thioredoxin fold region) with KDR/VEGFR2 (via juxtamembrane domain). Forms ternary complexes with the chaperonin CCT complex and actin substrate, leading to inhibition of actin folding. Interacts with XIAP (via BIR 3 and RING domain). Interacts with HSP90AA1 and HSP90AB1. N-terminal methionine acetylation destabilizes the protein. Expressed in endothelial cells (at protein level). Expressed in all tissues examined including spleen, thymus, prostate, testis, ovary, small intestine and colon.

It is found in the cytoplasm. Its subcellular location is the perinuclear region. It localises to the endoplasmic reticulum. Acts as a chaperone for the angiogenic VEGF receptor KDR/VEGFR2, increasing its abundance by inhibiting its ubiquitination and degradation. Inhibits the folding activity of the chaperonin-containing T-complex (CCT) which leads to inhibition of cytoskeletal actin folding. Acts as a chaperone during heat shock alongside HSP90 and HSP40/70 chaperone complexes. Modulates the activation of caspases during apoptosis. This is Phosducin-like protein 3 (PDCL3) from Homo sapiens (Human).